A 456-amino-acid polypeptide reads, in one-letter code: Argininosuccinate lyase (456 aa).

Belongs to the lyase 1 family. Argininosuccinate lyase subfamily.

It localises to the cytoplasm. It carries out the reaction 2-(N(omega)-L-arginino)succinate = fumarate + L-arginine. It functions in the pathway amino-acid biosynthesis; L-arginine biosynthesis; L-arginine from L-ornithine and carbamoyl phosphate: step 3/3. The protein is Argininosuccinate lyase of Listeria innocua serovar 6a (strain ATCC BAA-680 / CLIP 11262).